The chain runs to 130 residues: Small ribosomal subunit protein uS9 (130 aa).

The protein belongs to the universal ribosomal protein uS9 family.

This is Small ribosomal subunit protein uS9 from Xanthomonas oryzae pv. oryzae (strain MAFF 311018).